The following is a 307-amino-acid chain: uncharacterized protein (307 aa).

This is an uncharacterized protein from Rickettsia conorii (strain ATCC VR-613 / Malish 7).